The primary structure comprises 504 residues: L-carnitine/gamma-butyrobetaine antiporter (504 aa).

The next 12 membrane-spanning stretches (helical) occupy residues 10–30 (IEPKVFFPPLIIVGILCWLTV), 51–71 (WGWAFEWYMVVMLFGWFWLVF), 92–112 (IFMMFASCTSAAVLFWGSIEI), 143–163 (GPLPWATYSFLSVAFAYFFFV), 195–215 (FYLVALIFAMGTSLGLATPLV), 231–251 (LDAIIITCWIILNAICVACGL), 263–283 (SYLSFLMLGWVFIVSGASFIM), 316–336 (WTVFYWAWWVIYAIQMSIFLA), 347–367 (LCFGMVMGLTASTWILWTVLG), 398–418 (WAALPLSTATMWGFFILCFIA), 446–466 (LLVRIGWSILVGIIGIVLLAL), and 475–495 (AIIAGGCPLFFVNIMVTLSFI).

It belongs to the BCCT transporter (TC 2.A.15) family. CaiT subfamily. As to quaternary structure, homotrimer.

It is found in the cell inner membrane. It carries out the reaction 4-(trimethylamino)butanoate(in) + (R)-carnitine(out) = 4-(trimethylamino)butanoate(out) + (R)-carnitine(in). It functions in the pathway amine and polyamine metabolism; carnitine metabolism. Catalyzes the exchange of L-carnitine for gamma-butyrobetaine. This is L-carnitine/gamma-butyrobetaine antiporter from Escherichia coli O157:H7.